A 702-amino-acid polypeptide reads, in one-letter code: Polyribonucleotide nucleotidyltransferase (702 aa).

2 residues coordinate Mg(2+): Asp486 and Asp492. Residues Pro553–Ile612 form the KH domain. The 69-residue stretch at Asp622–Lys690 folds into the S1 motif domain.

It belongs to the polyribonucleotide nucleotidyltransferase family. Component of the RNA degradosome, which is a multiprotein complex involved in RNA processing and mRNA degradation. Mg(2+) serves as cofactor.

Its subcellular location is the cytoplasm. It catalyses the reaction RNA(n+1) + phosphate = RNA(n) + a ribonucleoside 5'-diphosphate. In terms of biological role, involved in mRNA degradation. Catalyzes the phosphorolysis of single-stranded polyribonucleotides processively in the 3'- to 5'-direction. This is Polyribonucleotide nucleotidyltransferase from Marinomonas sp. (strain MWYL1).